A 219-amino-acid polypeptide reads, in one-letter code: Rho-related protein racN (219 aa).

12 to 19 contributes to the GTP binding site; sequence GDVTIGKT. An Effector region motif is present at residues 33-41; it reads YIPTIFDNH. Residues 58–62 and 114–117 each bind GTP; these read DTGGG and TKTD. Cysteine methyl ester is present on Cys-216. Residue Cys-216 is the site of S-geranylgeranyl cysteine attachment. The propeptide at 217 to 219 is removed in mature form; that stretch reads IIC.

The protein belongs to the small GTPase superfamily. Rho family.

It is found in the cell membrane. The sequence is that of Rho-related protein racN (racN) from Dictyostelium discoideum (Social amoeba).